The chain runs to 313 residues: Intelectin-1 (313 aa).

The first 18 residues, 1–18 (MNQLSFLLFLIATTRGWS), serve as a signal peptide directing secretion. A Fibrinogen C-terminal domain is found at 32–255 (SSSPSLPRSC…AANALCAGMR (224 aa)). Cysteine 41 and cysteine 70 are oxidised to a cystine. Positions 86, 87, 89, 92, 97, 98, and 133 each coordinate Ca(2+). 3 disulfides stabilise this stretch: cysteine 94–cysteine 280, cysteine 199–cysteine 259, and cysteine 251–cysteine 265. A glycan (N-linked (GlcNAc...) asparagine) is linked at asparagine 163. The Ca(2+) site is built by asparagine 260, glutamate 262, glutamate 274, and aspartate 282. Residues 262–263 (EH) and glutamate 274 contribute to the a carbohydrate site. Serine 298 is lipidated: GPI-anchor amidated serine. Residues 299 to 313 (SSREITEAAVLLFYR) constitute a propeptide that is removed on maturation.

Homotrimer; disulfide-linked. May interact with LTF. In terms of processing, N-glycosylated. Highly expressed in omental adipose tissue where it is found in stromal vascular cells but not in fat cells but is barely detectable in subcutaneous adipose tissue (at protein level). Highly expressed in the small intestine. Also found in the heart, testis, colon, salivary gland, skeletal muscle, pancreas and thyroid and, to a lesser degree, in the uterus, spleen, prostate, lymph node and thymus.

The protein localises to the cell membrane. It is found in the secreted. In terms of biological role, lectin that specifically recognizes microbial carbohydrate chains in a calcium-dependent manner. Binds to microbial glycans that contain a terminal acyclic 1,2-diol moiety, including beta-linked D-galactofuranose (beta-Galf), D-phosphoglycerol-modified glycans, D-glycero-D-talo-oct-2-ulosonic acid (KO) and 3-deoxy-D-manno-oct-2-ulosonic acid (KDO). Binds to glycans from Gram-positive and Gram-negative bacteria, including K.pneumoniae, S.pneumoniae, Y.pestis, P.mirabilis and P.vulgaris. Does not bind human glycans. Probably plays a role in the defense system against microorganisms. May function as adipokine that has no effect on basal glucose uptake but enhances insulin-stimulated glucose uptake in adipocytes. Increases AKT phosphorylation in the absence and presence of insulin. May interact with lactoferrin/LTF and increase its uptake, and may thereby play a role in iron absorption. The protein is Intelectin-1 (ITLN1) of Homo sapiens (Human).